Reading from the N-terminus, the 700-residue chain is Hedgehog-interacting protein (700 aa).

A signal peptide spans 1-17 (MLKMLSFKLLLLAVALG). N-linked (GlcNAc...) asparagine glycosylation occurs at N99. Intrachain disulfides connect C216–C536, C218–C543, C402–C624, C435–C452, C500–C594, C612–C623, C625–C634, C639–C649, C643–C655, and C657–C666. The interaction with SHH zinc binding site stretch occupies residues 376 to 388 (LDDMEEMDGLSDF). A Zn(2+)-binding site is contributed by D383. N-linked (GlcNAc...) asparagine glycosylation is found at N416, N447, and N459. EGF-like domains follow at residues 607 to 634 (DCSR…GDFC) and 635 to 667 (RIAK…PQCE).

The protein belongs to the HHIP family. Interacts with all three hedgehog family members, SHH, IHH and DHH. In the adult brain, high expression found in the ventral cochlear nucleus, medial habenula, indusium griseum and tenia tecta. Some expression also in the caudate putamen, the nucleus accumbens, the ventral pallidum and in the superficial layers of the superior colliculus.

It is found in the cell membrane. The protein resides in the secreted. Its function is as follows. Modulates hedgehog signaling in several cell types, including brain and lung through direct interaction with members of the hedgehog family. Soluble forms inhibit Shh-induced differentiation in the fibroblast cell line C3H/10T1/2. This chain is Hedgehog-interacting protein (Hhip), found in Mus musculus (Mouse).